A 219-amino-acid polypeptide reads, in one-letter code: Peroxiredoxin-5, mitochondrial (219 aa).

The N-terminal 57 residues, 1–57 (MRLGWLRVLGCRPGSVVSRATIVEGASTTAAGTRGCLEGILEWTFGGVRGFRSAAVA), are a transit peptide targeting the mitochondrion. The 159-residue stretch at 61-219 (IKVGDAIPSV…SLAPNILSQL (159 aa)) folds into the Thioredoxin domain. Lys80 carries the N6-acetyllysine modification. Lys88 carries the post-translational modification N6-acetyllysine; alternate. Lys88 bears the N6-succinyllysine; alternate mark. Cys105 serves as the catalytic Cysteine sulfenic acid (-SOH) intermediate. A lipid anchor (S-palmitoyl cysteine) is attached at Cys105. A disulfide bridge links Cys105 with Cys209. Lys121 is modified (N6-succinyllysine). Ser187 carries the post-translational modification Phosphoserine. Residues 217 to 219 (SQL) carry the Microbody targeting signal motif.

The protein belongs to the peroxiredoxin family. Prx5 subfamily. Monomer. S-palmitoylated. Palmitoylation occurs on the active site, inhibiting its reactivity; therefore PRDX5 palmitoylation status determines its antioxidant capacity. In terms of processing, S-palmitoylated. Depalmitoylated by ABHD10.

The protein resides in the mitochondrion. Its subcellular location is the cytoplasm. It is found in the peroxisome matrix. It catalyses the reaction a hydroperoxide + [thioredoxin]-dithiol = an alcohol + [thioredoxin]-disulfide + H2O. Functionally, thiol-specific peroxidase that catalyzes the reduction of hydrogen peroxide and organic hydroperoxides to water and alcohols, respectively. Plays a role in cell protection against oxidative stress by detoxifying peroxides and as sensor of hydrogen peroxide-mediated signaling events. This Bos taurus (Bovine) protein is Peroxiredoxin-5, mitochondrial (PRDX5).